We begin with the raw amino-acid sequence, 171 residues long: MHRAPVGRNAEGQYFMFCFEHVKEYNKGYNFFSGLSDSEVARYQKEAITGHRPTWTVGVNKNAKNGPTQSQTRSGSAGAQARMRDPFGFVSEARARSGRPEPRQRKLKTLEAKAFETLGLGASATTADIKAAYKDLVKKHHPDANGGDRGSEERFRAVIQAYQLLKQAGFC.

The disordered stretch occupies residues 56 to 83 (TVGVNKNAKNGPTQSQTRSGSAGAQARM). A compositionally biased stretch (polar residues) spans 57 to 77 (VGVNKNAKNGPTQSQTRSGSA). The J domain occupies 113–170 (KAFETLGLGASATTADIKAAYKDLVKKHHPDANGGDRGSEERFRAVIQAYQLLKQAGF).

This is an uncharacterized protein from Sinorhizobium sp.